The sequence spans 327 residues: Dipeptide transport ATP-binding protein DppD (327 aa).

Residues 4–254 (LNVDKLSVHF…PRHPYTQALL (251 aa)) form the ABC transporter domain. 40 to 47 (GESGSGKS) is an ATP binding site.

Belongs to the ABC transporter superfamily. As to quaternary structure, the complex is composed of two ATP-binding proteins (DppD and DppF), two transmembrane proteins (DppB and DppC) and a solute-binding protein (DppA). MppA can replace DppA as binding protein for heme and ALA transport.

The protein resides in the cell inner membrane. The catalysed reaction is a dipeptide(out) + ATP + H2O = a dipeptide(in) + ADP + phosphate + H(+). Its function is as follows. Part of the ABC transporter DppABCDF involved in dipeptide transport. Responsible for energy coupling to the transport system. In terms of biological role, when a foreign outer membrane heme receptor is expressed in E.coli, DppABCDF can also transport heme and its precursor, 5-aminolevulinic acid (ALA), from the periplasm into the cytoplasm. This chain is Dipeptide transport ATP-binding protein DppD (dppD), found in Escherichia coli (strain K12).